Here is a 198-residue protein sequence, read N- to C-terminus: Sortase D (198 aa).

A helical membrane pass occupies residues 7 to 25 (LFIIAAGLVIAGYGGFKLI). Positions 36–46 (KEAKLAAKKPQ) are enriched in basic and acidic residues. The tract at residues 36–67 (KEAKLAAKKPQEASGTKNSTDQAKNKASFKPE) is disordered. The span at 48 to 57 (ASGTKNSTDQ) shows a compositional bias: polar residues. The active-site Proton donor/acceptor is histidine 119. The active-site Acyl-thioester intermediate is the cysteine 177.

It belongs to the bacterial sortase family. Class D subfamily.

The protein localises to the cell membrane. Transpeptidase that anchors surface proteins to the cell wall. Recognizes and modifies its substrate by proteolytic cleavage of a C-terminal sorting signal. Following cleavage, a covalent intermediate is formed via a thioester bond between the sortase and its substrate, which is then transferred and covalently attached to the cell wall. This sortase recognizes a Leu-Pro-Asp-Thr-Ser/Ala (LPDTS/A) motif. It has two substrates, YhcR and YfkN. The protein is Sortase D of Bacillus subtilis (strain 168).